The following is a 62-amino-acid chain: Large ribosomal subunit protein uL29 (62 aa).

This sequence belongs to the universal ribosomal protein uL29 family.

This is Large ribosomal subunit protein uL29 from Desulfosudis oleivorans (strain DSM 6200 / JCM 39069 / Hxd3) (Desulfococcus oleovorans).